The primary structure comprises 397 residues: Elongation factor Tu (397 aa).

Positions 10–206 (KPHVNVGTIG…TMDTYFPQPE (197 aa)) constitute a tr-type G domain. Residues 19-26 (GHVDHGKT) form a G1 region. Residue 19–26 (GHVDHGKT) coordinates GTP. Thr-26 serves as a coordination point for Mg(2+). Residues 60–64 (GITIA) are G2. The tract at residues 81–84 (DCPG) is G3. Residues 81 to 85 (DCPGH) and 136 to 139 (NKAD) each bind GTP. Residues 136–139 (NKAD) are G4. Residues 174–176 (SAL) are G5.

It belongs to the TRAFAC class translation factor GTPase superfamily. Classic translation factor GTPase family. EF-Tu/EF-1A subfamily. As to quaternary structure, monomer.

It is found in the cytoplasm. The enzyme catalyses GTP + H2O = GDP + phosphate + H(+). Its function is as follows. GTP hydrolase that promotes the GTP-dependent binding of aminoacyl-tRNA to the A-site of ribosomes during protein biosynthesis. This Coxiella burnetii (strain Dugway 5J108-111) protein is Elongation factor Tu.